The primary structure comprises 358 residues: Aromatic amino acid aminotransferase (358 aa).

Residue lysine 222 is modified to N6-(pyridoxal phosphate)lysine.

This sequence belongs to the class-II pyridoxal-phosphate-dependent aminotransferase family. In terms of assembly, homodimer. Pyridoxal 5'-phosphate serves as cofactor.

The enzyme catalyses an aromatic L-alpha-amino acid + 2-oxoglutarate = an aromatic oxo-acid + L-glutamate. Functionally, aminotransferase that catalyzes the conversion of aromatic amino acids and 2-oxoglutarate into corresponding aromatic oxo acids and L-glutamate. The chain is Aromatic amino acid aminotransferase from Mycobacterium sp. (strain JLS).